We begin with the raw amino-acid sequence, 60 residues long: Metallothionein B (60 aa).

The segment at 1-28 is beta; the sequence is MDPCDCSKSGTCNCGGSCTCTNCSCTSC. C4, C6, C12, C14, C18, C20, C23, C25, C28, C32, C33, C35, C36, C40, C43, C47, C49, C54, C58, and C59 together coordinate a divalent metal cation. The interval 29–60 is alpha; the sequence is KKSCCPCCPSGCTKCASGCVCKGKTCDTSCCQ.

Belongs to the metallothionein superfamily. Type 1 family.

Its function is as follows. Metallothioneins have a high content of cysteine residues that bind various heavy metals. The sequence is that of Metallothionein B (mtb) from Chionodraco hamatus (Antarctic teleost icefish).